The chain runs to 743 residues: F-box protein COS111 (743 aa).

An F-box domain is found at 145–191; the sequence is ELHIKNLPVEILDYIFYLVDDNLDYKSCMYTCKLFYFLAKPYYYENL. Disordered stretches follow at residues 224-257 and 311-330; these read IKPG…DPQY and FSNV…SSST. The segment covering 229–248 has biased composition (acidic residues); the sequence is DEDEQEEGQEENAENGEEEN.

In terms of biological role, F-box protein probably involved in ubiquitin conjugation pathway. The polypeptide is F-box protein COS111 (COS111) (Candida albicans (strain SC5314 / ATCC MYA-2876) (Yeast)).